A 410-amino-acid polypeptide reads, in one-letter code: Alanine racemase (410 aa).

An RPE1 insert domain is found at 28–76 (VDFLHNVANKEEFAGNTSPRTAAYTLVREDASLGSTPKLPLGASYAKNL). The Proton acceptor; specific for D-alanine role is filled by K83. N6-(pyridoxal phosphate)lysine is present on K83. Residue R182 participates in substrate binding. The Proton acceptor; specific for L-alanine role is filled by Y305. A substrate-binding site is contributed by M353.

The protein belongs to the alanine racemase family. Pyridoxal 5'-phosphate is required as a cofactor.

The catalysed reaction is L-alanine = D-alanine. The protein operates within amino-acid biosynthesis; D-alanine biosynthesis; D-alanine from L-alanine: step 1/1. Functionally, catalyzes the interconversion of L-alanine and D-alanine. May also act on other amino acids. This chain is Alanine racemase (alr), found in Rickettsia bellii (strain RML369-C).